The primary structure comprises 71 residues: Conotoxin Tx11.3 (71 aa).

The first 19 residues, 1-19, serve as a signal peptide directing secretion; it reads MKLCVTFLLVLVILPSVTG. Positions 20–47 are excised as a propeptide; it reads VKSSERTLSGAALRGDRGTCSGRGQECK. Intrachain disulfides connect cysteine 39-cysteine 53, cysteine 46-cysteine 58, cysteine 52-cysteine 63, and cysteine 57-cysteine 70.

The protein belongs to the I1 superfamily. Expressed by the venom duct.

It is found in the secreted. This is Conotoxin Tx11.3 from Conus textile (Cloth-of-gold cone).